Consider the following 155-residue polypeptide: UPF0266 membrane protein LMHCC_1856 (155 aa).

Transmembrane regions (helical) follow at residues 8–28 (IFLF…DAVI), 46–66 (RWDG…NTFF), and 70–90 (PFST…ICFF).

Belongs to the UPF0266 family.

The protein localises to the cell membrane. The polypeptide is UPF0266 membrane protein LMHCC_1856 (Listeria monocytogenes serotype 4a (strain HCC23)).